A 232-amino-acid polypeptide reads, in one-letter code: Small ribosomal subunit protein uS3 (232 aa).

The 69-residue stretch at 39–107 folds into the KH type-2 domain; that stretch reads VRQFLTKELA…PAQINIAEVR (69 aa).

The protein belongs to the universal ribosomal protein uS3 family. Part of the 30S ribosomal subunit. Forms a tight complex with proteins S10 and S14.

In terms of biological role, binds the lower part of the 30S subunit head. Binds mRNA in the 70S ribosome, positioning it for translation. This chain is Small ribosomal subunit protein uS3, found in Erwinia tasmaniensis (strain DSM 17950 / CFBP 7177 / CIP 109463 / NCPPB 4357 / Et1/99).